Here is a 919-residue protein sequence, read N- to C-terminus: Puromycin-sensitive aminopeptidase (919 aa).

Residues E180 and 316 to 320 each bind substrate; that span reads GAMEN. H352 serves as a coordination point for Zn(2+). Catalysis depends on E353, which acts as the Proton acceptor. Residues H356 and E375 each coordinate Zn(2+). Position 464 is a 3'-nitrotyrosine (Y464). A Nuclear localization signal motif is present at residues 726 to 730; sequence RRRFK.

This sequence belongs to the peptidase M1 family. Monomer. Zn(2+) is required as a cofactor. In terms of tissue distribution, detected in liver, epithelium of renal tubules, epithelium of small and large intestine, gastric epithelial cells, and alveoli of the lung (at protein level).

It localises to the cytoplasm. It is found in the cytosol. Its subcellular location is the nucleus. It carries out the reaction Release of an N-terminal amino acid, preferentially alanine, from a wide range of peptides, amides and arylamides.. Its activity is regulated as follows. Strongly inhibited by bestatin, leuhistin, actinonin, amastatin, 1,10-phenanthroline, DFP, PCMBS, Zn(2+), Cd(2+), Co(2+), Cu(2+), Hg(2+), EDTA and puromycin. Not inhibited by PMSF, and only slightly inhibited by leupeptin and aprotinin. Activity is increased by Mg(2+) and Ca(2+). Its function is as follows. Aminopeptidase with broad substrate specificity for several peptides. Involved in proteolytic events essential for cell growth and viability. May act as regulator of neuropeptide activity. Plays a role in the antigen-processing pathway for MHC class I molecules. Involved in the N-terminal trimming of cytotoxic T-cell epitope precursors. Digests the poly-Q peptides found in many cellular proteins. Digests tau from normal brain more efficiently than tau from Alzheimer disease brain. This chain is Puromycin-sensitive aminopeptidase (NPEPPS), found in Homo sapiens (Human).